Reading from the N-terminus, the 253-residue chain is MSDVAVAADTTETPAAPTKASKATKASKATKASKATKAKTTKVPMVKADAAHPPFINMVTEAISSIKDRKGPSRAAILKYITTKYTLGDQANKINAHLRKALNKGLESNAFVQASGNGANGRFRLAEKTASVAKSPAAAKKDATGEKKATTTVAKKAATGEKKATTTVAKKAATGEKKATTTVAKKAAAGDKAKKTEVKVKKVKSPKKIAKSPVNKVTKSPVKKIAKSSSMKAAPKKAAAKPAKKAPAAAPEA.

The segment covering 1–33 (MSDVAVAADTTETPAAPTKASKATKASKATKAS) has biased composition (low complexity). Positions 1-43 (MSDVAVAADTTETPAAPTKASKATKASKATKASKATKAKTTKV) are disordered. Ser-2 bears the N-acetylserine mark. An H15 domain is found at 51–127 (AHPPFINMVT…GANGRFRLAE (77 aa)). Residues 134–253 (KSPAAAKKDA…KKAPAAAPEA (120 aa)) are disordered. 2 stretches are compositionally biased toward basic and acidic residues: residues 139-149 (AKKDATGEKKA) and 188-200 (AAGDKAKKTEVKV). 2 stretches are compositionally biased toward basic residues: residues 201–210 (KKVKSPKKIA) and 234–244 (APKKAAAKPAK).

Belongs to the histone H1/H5 family.

It is found in the nucleus. The protein resides in the chromosome. In terms of biological role, histones H1 are necessary for the condensation of nucleosome chains into higher-order structures. The sequence is that of Histone H1.4 (hil-4) from Caenorhabditis elegans.